The sequence spans 101 residues: Small ribosomal subunit protein bS6 (101 aa).

It belongs to the bacterial ribosomal protein bS6 family.

Functionally, binds together with bS18 to 16S ribosomal RNA. This is Small ribosomal subunit protein bS6 from Nitratidesulfovibrio vulgaris (strain ATCC 29579 / DSM 644 / CCUG 34227 / NCIMB 8303 / VKM B-1760 / Hildenborough) (Desulfovibrio vulgaris).